We begin with the raw amino-acid sequence, 272 residues long: Indole-3-glycerol phosphate synthase (272 aa).

The protein belongs to the TrpC family.

It catalyses the reaction 1-(2-carboxyphenylamino)-1-deoxy-D-ribulose 5-phosphate + H(+) = (1S,2R)-1-C-(indol-3-yl)glycerol 3-phosphate + CO2 + H2O. It participates in amino-acid biosynthesis; L-tryptophan biosynthesis; L-tryptophan from chorismate: step 4/5. In Mycobacterium leprae (strain Br4923), this protein is Indole-3-glycerol phosphate synthase.